Reading from the N-terminus, the 434-residue chain is Trigger factor (434 aa).

Positions 161-246 constitute a PPIase FKBP-type domain; sequence EDRATLDFTG…LKKVEVRELP (86 aa).

This sequence belongs to the FKBP-type PPIase family. Tig subfamily.

The protein localises to the cytoplasm. The enzyme catalyses [protein]-peptidylproline (omega=180) = [protein]-peptidylproline (omega=0). Functionally, involved in protein export. Acts as a chaperone by maintaining the newly synthesized protein in an open conformation. Functions as a peptidyl-prolyl cis-trans isomerase. In Yersinia enterocolitica serotype O:8 / biotype 1B (strain NCTC 13174 / 8081), this protein is Trigger factor.